A 464-amino-acid polypeptide reads, in one-letter code: Chromosomal replication initiator protein DnaA (464 aa).

The segment at 1 to 82 is domain I, interacts with DnaA modulators; that stretch reads MSLSLWQQCL…LLRFEVGSKP (82 aa). Residues 82–127 are domain II; the sequence is PPQMAVLQPASQHASEAPSQAAVARPRPSRPSWDNAPVQPELSYRS. The interval 91–118 is disordered; sequence ASQHASEAPSQAAVARPRPSRPSWDNAP. Residues 128-344 form a domain III, AAA+ region region; the sequence is NVNPKHNFDN…GALNRVIANA (217 aa). Residues glycine 172, glycine 174, lysine 175, and threonine 176 each contribute to the ATP site. The segment at 345–464 is domain IV, binds dsDNA; the sequence is NFTGRAITID…FSNLIRTLSS (120 aa).

The protein belongs to the DnaA family. As to quaternary structure, oligomerizes as a right-handed, spiral filament on DNA at oriC.

Its subcellular location is the cytoplasm. Its function is as follows. Plays an essential role in the initiation and regulation of chromosomal replication. ATP-DnaA binds to the origin of replication (oriC) to initiate formation of the DNA replication initiation complex once per cell cycle. Binds the DnaA box (a 9 base pair repeat at the origin) and separates the double-stranded (ds)DNA. Forms a right-handed helical filament on oriC DNA; dsDNA binds to the exterior of the filament while single-stranded (ss)DNA is stabiized in the filament's interior. The ATP-DnaA-oriC complex binds and stabilizes one strand of the AT-rich DNA unwinding element (DUE), permitting loading of DNA polymerase. After initiation quickly degrades to an ADP-DnaA complex that is not apt for DNA replication. Binds acidic phospholipids. This Sodalis glossinidius (strain morsitans) protein is Chromosomal replication initiator protein DnaA.